We begin with the raw amino-acid sequence, 330 residues long: Aspartate--ammonia ligase (330 aa).

Belongs to the class-II aminoacyl-tRNA synthetase family. AsnA subfamily.

It is found in the cytoplasm. The catalysed reaction is L-aspartate + NH4(+) + ATP = L-asparagine + AMP + diphosphate + H(+). It functions in the pathway amino-acid biosynthesis; L-asparagine biosynthesis; L-asparagine from L-aspartate (ammonia route): step 1/1. The sequence is that of Aspartate--ammonia ligase from Salmonella schwarzengrund (strain CVM19633).